The chain runs to 169 residues: Lipoprotein signal peptidase (169 aa).

2 consecutive transmembrane segments (helical) span residues 59-79 and 84-104; these read PTVLLLLTGVITIMVLAYVIW and TTLFLLPFALITGGGIGNMID. Catalysis depends on residues Asp-113 and Asp-139. Residues 132 to 152 traverse the membrane as a helical segment; the sequence is WPIFNIADSAITIGACMLMIF.

The protein belongs to the peptidase A8 family.

Its subcellular location is the cell inner membrane. It carries out the reaction Release of signal peptides from bacterial membrane prolipoproteins. Hydrolyzes -Xaa-Yaa-Zaa-|-(S,diacylglyceryl)Cys-, in which Xaa is hydrophobic (preferably Leu), and Yaa (Ala or Ser) and Zaa (Gly or Ala) have small, neutral side chains.. It participates in protein modification; lipoprotein biosynthesis (signal peptide cleavage). This protein specifically catalyzes the removal of signal peptides from prolipoproteins. In Pelodictyon phaeoclathratiforme (strain DSM 5477 / BU-1), this protein is Lipoprotein signal peptidase.